A 253-amino-acid polypeptide reads, in one-letter code: HTH-type transcriptional regulator YdeO (253 aa).

The HTH araC/xylS-type domain occupies 137–233; the sequence is GKVRNIVNMK…GNSPKRVSKE (97 aa). 2 DNA-binding regions (H-T-H motif) span residues 154 to 175 and 200 to 223; these read KDIC…KQEQ and VNKI…RKHF.

Functionally, induces the expression of gadE. Could also regulate the expression of other genes involved in acid resistance. This is HTH-type transcriptional regulator YdeO (ydeO) from Shigella flexneri.